Consider the following 493-residue polypeptide: Glutamate--tRNA ligase (493 aa).

The 'HIGH' region signature appears at Pro10–Ser20. Zn(2+) is bound by residues Cys114, Cys116, Cys141, and Glu143. A 'KMSKS' region motif is present at residues Lys258–Arg262. Lys261 is an ATP binding site.

This sequence belongs to the class-I aminoacyl-tRNA synthetase family. Glutamate--tRNA ligase type 1 subfamily. As to quaternary structure, monomer. Zn(2+) is required as a cofactor.

The protein resides in the cytoplasm. The enzyme catalyses tRNA(Glu) + L-glutamate + ATP = L-glutamyl-tRNA(Glu) + AMP + diphosphate. Catalyzes the attachment of glutamate to tRNA(Glu) in a two-step reaction: glutamate is first activated by ATP to form Glu-AMP and then transferred to the acceptor end of tRNA(Glu). This chain is Glutamate--tRNA ligase, found in Alkaliphilus metalliredigens (strain QYMF).